A 461-amino-acid chain; its full sequence is Ribitol-5-phosphate transferase FKTN (461 aa).

Residues 1–7 (MSRINKN) are Cytoplasmic-facing. The required and sufficient for interaction with POMGNT1 stretch occupies residues 6 to 27 (KNVVLALLTLTSSAFLLFQLYY). A helical; Signal-anchor for type II membrane protein transmembrane segment spans residues 8-28 (VVLALLTLTSSAFLLFQLYYY). At 29–461 (KHYLSTKNGA…SEWDEVIQLY (433 aa)) the chain is on the lumenal side. N92 carries N-linked (GlcNAc...) asparagine glycosylation.

The protein belongs to the LicD transferase family. In terms of assembly, forms a complex composed of FKTN/fukutin, FKRP and RXYLT1/TMEM5. Interacts (via transmembrane domain) with POMGNT1; the interaction is direct and is required for normal POMGNT1 location in Golgi membranes. In terms of tissue distribution, expressed in the retina (at protein level). Widely expressed with highest expression in brain, heart, pancreas and skeletal muscle. Expressed at similar levels in control fetal and adult brain. Expressed in migrating neurons, including Cajar-Retzius cells and adult cortical neurons, as well as hippocampal pyramidal cells and cerebellar Purkinje cells. No expression observed in the glia limitans, the subpial astrocytes (which contribute to basement membrane formation) or other glial cells.

The protein resides in the golgi apparatus membrane. It localises to the cytoplasm. The protein localises to the nucleus. The enzyme catalyses 3-O-[beta-D-GalNAc-(1-&gt;3)-beta-D-GlcNAc-(1-&gt;4)-(O-6-P-alpha-D-Man)]-Thr-[protein] + CDP-L-ribitol = 3-O-[Rib-ol-P-3-beta-D-GalNAc-(1-&gt;3)-beta-D-GlcNAc-(1-&gt;4)-(O-6-P-alpha-D-Man)]-Thr-[protein] + CMP + H(+). It functions in the pathway protein modification; protein glycosylation. Functionally, catalyzes the transfer of a ribitol-phosphate from CDP-ribitol to the distal N-acetylgalactosamine of the phosphorylated O-mannosyl trisaccharide (N-acetylgalactosamine-beta-3-N-acetylglucosamine-beta-4-(phosphate-6-)mannose), a carbohydrate structure present in alpha-dystroglycan (DAG1). This constitutes the first step in the formation of the ribitol 5-phosphate tandem repeat which links the phosphorylated O-mannosyl trisaccharide to the ligand binding moiety composed of repeats of 3-xylosyl-alpha-1,3-glucuronic acid-beta-1. Required for normal location of POMGNT1 in Golgi membranes, and for normal POMGNT1 activity. May interact with and reinforce a large complex encompassing the outside and inside of muscle membranes. Could be involved in brain development. This Homo sapiens (Human) protein is Ribitol-5-phosphate transferase FKTN.